The primary structure comprises 2435 residues: Highly reducing polyketide synthase ATR6 (2435 aa).

The Ketosynthase family 3 (KS3) domain occupies 18–450; the sequence is AEPIAIVSAA…GSNAHVVLDN (433 aa). Catalysis depends on for beta-ketoacyl synthase activity residues cysteine 192, histidine 331, and histidine 371. A malonyl-CoA:ACP transacylase (MAT) domain region spans residues 586-883; that stretch reads FVFTGQGAQW…EIGPSAALGG (298 aa). The active-site For malonyltransferase activity is serine 682. Residues 979–1125 are N-terminal hotdog fold; sequence HDLLGGKVLG…GLVRLALNAS (147 aa). The segment at 979-1291 is dehydratase (DH) domain; that stretch reads HDLLGGKVLG…LRGISMTSVG (313 aa). Positions 979–1296 constitute a PKS/mFAS DH domain; that stretch reads HDLLGGKVLG…MTSVGLQGNV (318 aa). The active-site For beta-hydroxyacyl dehydratase activity is the histidine 1011. The segment at 1141-1296 is C-terminal hotdog fold; that stretch reads QYPTPARFWY…MTSVGLQGNV (156 aa). The segment at 1724-2037 is enoylreductase (ER) domain; the sequence is GILDTLHFAE…DHNRLRNVVI (314 aa). The interval 2062–2301 is catalytic ketoreductase (KRc) domain; it reads PEQTYLLVGK…ITGIAVPQPG (240 aa). A Carrier domain is found at 2353 to 2429; it reads VLLSSAVGVL…VLCQKIISRM (77 aa). An O-(pantetheine 4'-phosphoryl)serine modification is found at serine 2389.

Its pathway is mycotoxin biosynthesis. Its function is as follows. Highly reducing polyketide synthase; part of the core atranone cluster (CAC) which products are predicted to catalyze most or all steps of mycotoxin atranone synthesis, starting from geranylgeranyl pyrophosphate (GGPP). The initial cyclization of GGPP to dolabellane is probably performed by the terpene cyclase ATR13. The Baeyer-Villiger oxidation near the end of the atranone synthesis, which converts atranones D and E to atranones F and G is predicted to be catalyzed by the monooxygenase ATR8. Of the CAC's other predicted gene products, the reducing PKS ATR6 might synthesize a polyketide chain. This polyketide is probably transferred onto the atranone backbone by the polyketide transferase ATR5. Other predicted CAC products include 4 oxygenases (ATR2, ATR3, ATR4, and ATR14), 3 short-chain reductases (ATR7, ATR9, and ATR10), and a methyltransferase (ATR12). These may all be involved in the various steps of atranone biosynthesis, although their specific roles must await experimental determination. The protein is Highly reducing polyketide synthase ATR6 of Stachybotrys chlorohalonatus (strain IBT 40285).